The sequence spans 399 residues: Acetate kinase (399 aa).

Mg(2+) is bound at residue Asn7. Lys14 lines the ATP pocket. Arg89 serves as a coordination point for substrate. Residue Asp146 is the Proton donor/acceptor of the active site. ATP is bound by residues 206 to 210, 280 to 282, and 328 to 332; these read HLGNG, DMR, and GIGEN. Residue Glu382 coordinates Mg(2+).

Belongs to the acetokinase family. As to quaternary structure, homodimer. It depends on Mg(2+) as a cofactor. Requires Mn(2+) as cofactor.

Its subcellular location is the cytoplasm. It carries out the reaction acetate + ATP = acetyl phosphate + ADP. It functions in the pathway metabolic intermediate biosynthesis; acetyl-CoA biosynthesis; acetyl-CoA from acetate: step 1/2. Functionally, catalyzes the formation of acetyl phosphate from acetate and ATP. Can also catalyze the reverse reaction. This chain is Acetate kinase, found in Campylobacter fetus subsp. fetus (strain 82-40).